A 316-amino-acid polypeptide reads, in one-letter code: SWR complex protein 2 (316 aa).

3 disordered regions span residues 1-81 (MSAT…GEEV), 93-127 (KRKI…KKKY), and 153-180 (ETRL…TMTQ). The span at 20–31 (KMRELLEKEHLR) shows a compositional bias: basic and acidic residues. The stretch at 20 to 95 (KMRELLEKEH…RDEERIKKRK (76 aa)) forms a coiled coil. A compositionally biased stretch (acidic residues) spans 40 to 56 (EKEDEEYNIEEEEEAER). Phosphoserine is present on residues Ser-64 and Ser-65. Basic and acidic residues predominate over residues 70-81 (ELKKLEEEGEEV). Over residues 167–180 (VSASANRQKGTMTQ) the composition is skewed to polar residues.

It belongs to the VPS72/YL1 family. As to quaternary structure, component of the SWR1 chromatin-remodeling complex.

It localises to the nucleus. Participates in the catalytic exchange of histone H2A for the H2A variant pht1, an euchromatin-specific factor, leading to chromatin remodeling and changes in transcription of targeted genes. The polypeptide is SWR complex protein 2 (swc2) (Schizosaccharomyces pombe (strain 972 / ATCC 24843) (Fission yeast)).